We begin with the raw amino-acid sequence, 387 residues long: Odorant receptor 19a (387 aa).

Residues 1–40 (MDISKVDSTRALVNHWRIFRIMGIHPPGKRTFWGRHYTAY) are Cytoplasmic-facing. A helical membrane pass occupies residues 41–61 (SMVWNVTFHICIWVSFSVNLL). The Extracellular segment spans residues 62-71 (QSNSLETFCE). The chain crosses the membrane as a helical span at residues 72-92 (SLCVTMPHTLYMLKLINVRRM). The Cytoplasmic portion of the chain corresponds to 93 to 127 (RGQMISSHWLLRLLDKRLGCDDERQIIMAGIERAE). A helical transmembrane segment spans residues 128-148 (FIFRTIFRGLACTVVLGIIYI). At 149-171 (SASSEPTLMYPTWIPWNWRDSTS) the chain is on the extracellular side. The helical transmembrane segment at 172-192 (AYLATAMLHTTALMANATLVL) threads the bilayer. Over 193 to 254 (NLSSYPGTYL…LRLFKSLERS (62 aa)) the chain is Cytoplasmic. A helical transmembrane segment spans residues 255-275 (LSMTCFLQFFSTACAQCTICY). The Extracellular portion of the chain corresponds to 276–285 (FLLFGNVGIM). A helical membrane pass occupies residues 286–306 (RFMNMLFLLVILTTETLLLCY). Residues 307-336 (TAELPCKEGESLLTAVYSCNWLSQSVNFRR) are Cytoplasmic-facing. Residues 337-357 (LLLLMLARCQIPMILVSGVIV) traverse the membrane as a helical segment. Over 358 to 387 (PISMKTFTVMIKGAYTMLTLLNEIRKTSLE) the chain is Extracellular.

This sequence belongs to the insect chemoreceptor superfamily. Heteromeric odorant receptor channel (TC 1.A.69) family. Or2a subfamily. In terms of assembly, interacts with Orco. Complexes exist early in the endomembrane system in olfactory sensory neurons (OSNs), coupling these complexes to the conserved ciliary trafficking pathway. As to expression, expressed in ai2A olfactory sensory neurons in the antenna.

Its subcellular location is the cell membrane. Odorant receptor which mediates acceptance or avoidance behavior, depending on its substrates. The odorant receptor repertoire encodes a large collection of odor stimuli that vary widely in identity, intensity, and duration. May form a complex with Orco to form odorant-sensing units, providing sensitive and prolonged odorant signaling and calcium permeability. Involved in the preference for citrus fruits for oviposition, especially through the response to valencene, the primary ligand of Or19a. Larvae growing on citrus fruits suffer a reduced risk of parasitism since endoparasitoid wasps that parasitize larvae are strongly repelled by the smell of citrus, as well as by valencene. This is Odorant receptor 19a (Or19a) from Drosophila melanogaster (Fruit fly).